Consider the following 130-residue polypeptide: Snaclec B8 (130 aa).

3 cysteine pairs are disulfide-bonded: cysteine 2–cysteine 13, cysteine 30–cysteine 124, and cysteine 99–cysteine 116. The C-type lectin domain occupies 9–125 (HEGHCYKVFK…CELAYHFICM (117 aa)).

This sequence belongs to the snaclec family. Heterodimer; disulfide-linked. As to expression, expressed by the venom gland.

Its subcellular location is the secreted. Interferes with one step of hemostasis (modulation of platelet aggregation, or coagulation cascade, for example). The sequence is that of Snaclec B8 from Macrovipera lebetinus (Levantine viper).